The following is a 438-amino-acid chain: Glycerophosphocholine cholinephosphodiesterase ENPP6 (438 aa).

A signal peptide spans 1–22 (MTRTLLKIYTLFILLLCRQRDA). Residues Asp-32, Ser-69, and Asn-90 each coordinate substrate. Asp-32 and Ser-69 together coordinate Zn(2+). Ser-69 (nucleophile) is an active-site residue. A Phosphoserine modification is found at Ser-69. A disulfide bond links Cys-140 and Cys-152. Residues 162–226 (KNLTDSMENA…ILNQKIREKN (65 aa)) adopt a coiled-coil conformation. The N-linked (GlcNAc...) asparagine glycan is linked to Asn-163. Asp-191 serves as a coordination point for substrate. The Zn(2+) site is built by Asp-191, His-195, Asp-238, and His-239. Substrate is bound at residue His-239. N-linked (GlcNAc...) asparagine glycosylation is found at Asn-258, Asn-287, and Asn-339. His-352 is a binding site for substrate. Zn(2+) is bound at residue His-352. Residue Asn-402 is glycosylated (N-linked (GlcNAc...) asparagine). A lipid anchor (GPI-anchor amidated serine) is attached at Ser-415. Residues 416-438 (AATAGASLISCCFLLLLTLTGVC) constitute a propeptide, removed in mature form.

This sequence belongs to the nucleotide pyrophosphatase/phosphodiesterase family. Requires Zn(2+) as cofactor.

The protein resides in the cell membrane. The enzyme catalyses sn-glycerol 3-phosphocholine + H2O = phosphocholine + glycerol + H(+). It carries out the reaction a 1-acyl-sn-glycero-3-phosphocholine + H2O = a 1-acyl-sn-glycerol + phosphocholine + H(+). It catalyses the reaction a 1-O-alkyl-sn-glycero-3-phosphocholine + H2O = a 1-O-alkyl-sn-glycerol + phosphocholine + H(+). The catalysed reaction is 1-dodecanoyl-sn-glycero-3-phosphocholine + H2O = 1-dodecanoyl-sn-glycerol + phosphocholine + H(+). The enzyme catalyses 1-hexadecanoyl-sn-glycero-3-phosphocholine + H2O = 1-hexadecanoyl-sn-glycerol + phosphocholine + H(+). It carries out the reaction 1-(5Z,8Z,11Z,14Z-eicosatetraenoyl)-sn-glycero-3-phosphocholine + H2O = 1-(5Z,8Z,11Z,14Z-eicosatetraenoyl)-sn-glycerol + phosphocholine + H(+). It catalyses the reaction 1-tetradecanoyl-sn-glycero-3-phosphocholine + H2O = 1-tetradecanoyl-sn-glycerol + phosphocholine + H(+). The catalysed reaction is sphing-4-enine-phosphocholine + H2O = sphing-4-enine + phosphocholine + H(+). The enzyme catalyses 1-(9Z-octadecenoyl)-sn-glycero-3-phosphocholine + H2O = 1-(9Z-octadecenoyl)-sn-glycerol + phosphocholine + H(+). It carries out the reaction 1-(9Z,12Z)-octadecadienoyl-sn-glycero-3-phosphocholine + H2O = 1-(9Z,12Z-octadecadienoyl)-sn-glycerol + phosphocholine + H(+). It catalyses the reaction glycero-2-phosphocholine + H2O = phosphocholine + glycerol + H(+). In terms of biological role, choline-specific glycerophosphodiesterase that hydrolyzes glycerophosphocholine (GPC) and lysophosphatidylcholine (LPC) and contributes to supplying choline to the cells. Has a preference for LPC with short (12:0 and 14:0) or polyunsaturated (18:2 and 20:4) fatty acids. In vitro, hydrolyzes only choline-containing lysophospholipids, such as sphingosylphosphorylcholine (SPC), platelet-activating factor (PAF) and lysoPAF, but not other lysophospholipids. This Danio rerio (Zebrafish) protein is Glycerophosphocholine cholinephosphodiesterase ENPP6.